Here is a 243-residue protein sequence, read N- to C-terminus: MSSIYLGVNIDHIATLRNARGTKYPDPVHAAEIAERAGADGITIHLREDRRHILDRDVRILRETIQTRMNLEMAVTEEMVEIALKTKPEFVCLVPEKREELTTEGGLDVVGQLDKVKAATQKLTEAGIKVSLFIDADRQQIEAAKQCGAPFIELHTGHYADAETEEEQQAELKKIAAGASYADDLGIIVNAGHGLTYHNVAPIAALPEIYELNIGHSIIGRAVFDGLEKSVAEMKALMIAARK.

N9 serves as a coordination point for 3-amino-2-oxopropyl phosphate. 1-deoxy-D-xylulose 5-phosphate is bound at residue 11–12; that stretch reads DH. Residue R20 coordinates 3-amino-2-oxopropyl phosphate. The active-site Proton acceptor is the H45. R47 and H52 together coordinate 1-deoxy-D-xylulose 5-phosphate. E72 functions as the Proton acceptor in the catalytic mechanism. T102 contributes to the 1-deoxy-D-xylulose 5-phosphate binding site. The active-site Proton donor is the H193. 3-amino-2-oxopropyl phosphate contacts are provided by residues G194 and 215–216; that span reads GH.

This sequence belongs to the PNP synthase family. As to quaternary structure, homooctamer; tetramer of dimers.

The protein resides in the cytoplasm. It catalyses the reaction 3-amino-2-oxopropyl phosphate + 1-deoxy-D-xylulose 5-phosphate = pyridoxine 5'-phosphate + phosphate + 2 H2O + H(+). It participates in cofactor biosynthesis; pyridoxine 5'-phosphate biosynthesis; pyridoxine 5'-phosphate from D-erythrose 4-phosphate: step 5/5. Its function is as follows. Catalyzes the complicated ring closure reaction between the two acyclic compounds 1-deoxy-D-xylulose-5-phosphate (DXP) and 3-amino-2-oxopropyl phosphate (1-amino-acetone-3-phosphate or AAP) to form pyridoxine 5'-phosphate (PNP) and inorganic phosphate. This Vibrio parahaemolyticus serotype O3:K6 (strain RIMD 2210633) protein is Pyridoxine 5'-phosphate synthase.